Consider the following 74-residue polypeptide: Protein kish-B (74 aa).

A signal peptide spans 1-22 (MTNVYSLDGLLVFALLFVCTCA). Residues 23 to 52 (YFRKVPRLRSWLLSEKKGVWGVFYKAAVIG) lie on the Extracellular side of the membrane. A helical membrane pass occupies residues 53–73 (SRLHLAVSISCIAMAFYVLFI). A topological domain (cytoplasmic) is located at residue lysine 74.

Belongs to the KISH family.

The protein localises to the golgi apparatus membrane. In terms of biological role, involved in the early part of the secretory pathway. The chain is Protein kish-B (tmem167b) from Xenopus laevis (African clawed frog).